The chain runs to 112 residues: UPF0251 protein MA_4245 (112 aa).

Belongs to the UPF0251 family.

This is UPF0251 protein MA_4245 from Methanosarcina acetivorans (strain ATCC 35395 / DSM 2834 / JCM 12185 / C2A).